A 283-amino-acid chain; its full sequence is Pantothenate synthetase (283 aa).

Residue 30–37 participates in ATP binding; it reads MGNLHAGH. His37 acts as the Proton donor in catalysis. Gln61 is a binding site for (R)-pantoate. Gln61 serves as a coordination point for beta-alanine. 149–152 is an ATP binding site; that stretch reads GEKD. Position 155 (Gln155) interacts with (R)-pantoate. ATP is bound by residues Val178 and 186-189; that span reads LSSR.

The protein belongs to the pantothenate synthetase family. As to quaternary structure, homodimer.

It localises to the cytoplasm. The catalysed reaction is (R)-pantoate + beta-alanine + ATP = (R)-pantothenate + AMP + diphosphate + H(+). The protein operates within cofactor biosynthesis; (R)-pantothenate biosynthesis; (R)-pantothenate from (R)-pantoate and beta-alanine: step 1/1. Functionally, catalyzes the condensation of pantoate with beta-alanine in an ATP-dependent reaction via a pantoyl-adenylate intermediate. This Azotobacter vinelandii (strain DJ / ATCC BAA-1303) protein is Pantothenate synthetase.